The following is a 417-amino-acid chain: Dibenzothiophene monooxygenase (417 aa).

The segment at 19 to 125 (DPVAVARGLA…LYTQIAQNNW (107 aa)) is helical N-terminus. FMN-binding positions include Tyr96, 129–134 (NASSEN), 159–163 (KHFCS), Arg282, 369–370 (AR), and His391. The segment at 126 to 234 (WTGNASSENN…VEPDEVLGAP (109 aa)) is central beta-barrel N-terminus. The tract at residues 131–142 (SSENNSHELDVK) is lid loop. Residues 235-409 (NAFVLAFIQS…DVGKHTLNGQ (175 aa)) are helical C-terminus.

Belongs to the DszC flavin monooxygenase family. In terms of assembly, homotetramer.

The protein resides in the cytoplasm. It catalyses the reaction dibenzothiophene + 2 FMNH2 + 2 O2 = dibenzothiophene 5,5-dioxide + 2 FMN + 2 H2O + 2 H(+). The enzyme catalyses dibenzothiophene + FMNH2 + O2 = dibenzothiophene 5-oxide + FMN + H2O + H(+). It carries out the reaction dibenzothiophene 5-oxide + FMNH2 + O2 = dibenzothiophene 5,5-dioxide + FMN + H2O + H(+). The protein operates within sulfur metabolism; dibenzothiophene degradation. In terms of biological role, catalyzes the first step of the '4S' desulfurization pathway that removes covalently bound sulfur from dibenzothiophene (DBT) without breaking carbon-carbon bonds. Sulfur dioxygenase which converts DBT to DBT-sulfone (DBTO2 or DBT 5,5-dioxide) in a stepwise manner. This chain is Dibenzothiophene monooxygenase, found in Rhodococcus erythropolis (Arthrobacter picolinophilus).